The sequence spans 210 residues: Cell division protein SepF (210 aa).

The tract at residues 13–78 (GFGEPTGYDY…VTSTAMNPPM (66 aa)) is disordered. The span at 22–31 (YDYDEMEGDD) shows a compositional bias: acidic residues. Residues 47–60 (RSEEPHPRPSEPEM) show a composition bias toward basic and acidic residues. The span at 64–78 (VNTSAVTSTAMNPPM) shows a compositional bias: polar residues.

This sequence belongs to the SepF family. As to quaternary structure, homodimer. Interacts with FtsZ.

It is found in the cytoplasm. Functionally, cell division protein that is part of the divisome complex and is recruited early to the Z-ring. Probably stimulates Z-ring formation, perhaps through the cross-linking of FtsZ protofilaments. Its function overlaps with FtsA. The sequence is that of Cell division protein SepF from Cyanothece sp. (strain PCC 7425 / ATCC 29141).